A 655-amino-acid chain; its full sequence is Methyl-accepting chemotaxis protein McpC (655 aa).

Residues 1–8 (MFKKLHMK) lie on the Cytoplasmic side of the membrane. A helical transmembrane segment spans residues 9–29 (IAVFVSIMLIITVVLLMLSSY). Residues 30–276 (LTLKPMITED…LMWISDKMNR (247 aa)) are Extracellular-facing. The 78-residue stretch at 148–225 (WTEPYKDVVT…SNQGKNISKD (78 aa)) folds into the Cache domain. The helical transmembrane segment at 277-297 (ANLWISLIALIITIILSYFLA) threads the bilayer. The region spanning 298-350 (KTITGPIQQLIVKTKAVSAGDLTVRAESKSKDEVGILTRDFNLMVENMKEMVE) is the HAMP domain. Residues 298–655 (KTITGPIQQL…LMNTIAKFTL (358 aa)) lie on the Cytoplasmic side of the membrane. Positions 369-619 (VAAETNETSG…ESAAAAEEVN (251 aa)) constitute a Methyl-accepting transducer domain.

Belongs to the methyl-accepting chemotaxis (MCP) protein family. As to quaternary structure, interacts with FloT. Post-translationally, some glutamine residues are deamidated to glutamate by CheD and subsequently methylated.

The protein localises to the cell membrane. Its subcellular location is the membrane raft. Its function is as follows. Chemotactic-signal transducers respond to changes in the concentration of attractants and repellents in the environment, transduce a signal from the outside to the inside of the cell, and facilitate sensory adaptation through the variation of the level of methylation. All amino acids serve as attractants in B.subtilis, they appear to cause an increase in the turnover methyl groups, leading to methylation of an unidentified acceptor, while repellents have been shown to cause a decrease in methyl group turnover. The methyl groups are added by a methyltransferase and removed by a methylesterase. McpC is required for taxis to cysteine, proline, threonine, glycine, serine, lysine, valine and arginine and for aspartate, glutamine, histidine and glutamate. Primarily mediates response to positive stimulus of PTS carbohydrates. Greatly influences the duration or magnitude of the response to negative PTS carbohydrate stimulus. This Bacillus subtilis (strain 168) protein is Methyl-accepting chemotaxis protein McpC (mcpC).